Consider the following 501-residue polypeptide: Sensor histidine kinase PdtaS (501 aa).

The GAF stretch occupies residues 4–150 (LGDLLAEHTV…HLETAYRLCA (147 aa)). A PAS-like region spans residues 179-291 (DGFIRLDVDG…TEVKRRDRAL (113 aa)). A Histidine kinase domain is found at 300–495 (EIHHRVKNNL…DVVLRVPVGR (196 aa)). Residue H303 is modified to Phosphohistidine; by autocatalysis.

Autophosphorylated.

It localises to the cytoplasm. The enzyme catalyses ATP + protein L-histidine = ADP + protein N-phospho-L-histidine.. Its function is as follows. Member of the two-component regulatory system PdtaR/PdtaS. This two-component system plays an essential role in mycobacterial adaptation to poor nutrient conditions. Nutrient deprivation results in increasing intracellular concentrations of cyclic diguanosine monophosphate (c-di-GMP), which binds to the PdtaS sensor and promotes its autophosphorylation, leading to the activation of the signaling cascade. The phosphate group is then transferred to PdtaR. Functionally, in addition, the PdtaR/PdtaS two-component system controls copper and nitric oxide (NO) resistance downstream of the intramembrane protease Rip1. This coupled Rip1/PdtaS/PdtaR circuit controls NO resistance and acute lung infection in mice by relieving PdtaR/PdtaS-mediated repression of isonitrile chalkophore biosynthesis. Two signals are required to fully inactivate the PdtaR/PdtaS system and mediate NO resistance: a cytoplasmic inhibitory signal through the PdtaS kinase mediated by direct sensing of NO and the production of PPE1-5', an NO-induced small RNA, to sequester PdtaR. In Mycobacterium tuberculosis (strain CDC 1551 / Oshkosh), this protein is Sensor histidine kinase PdtaS (pdtaS).